We begin with the raw amino-acid sequence, 192 residues long: MMNKKAIVLYGGQFNPIHTAHLLVANEVYHQLKPDKFYFLPSYMAPLKTHDDYLDAKYRIKMIQLAIEELGFGEICQIELERKGQSYTYETLKDIVNNEKDADIYFIIGTDQYKQLDKWYKIEKLKQLITFVIVNRDVNYQEVDESMISVNIPRMDISSSLIRNRVKNKQPINILVPRSIHDYIREEGFYEN.

It belongs to the NadD family.

It catalyses the reaction nicotinate beta-D-ribonucleotide + ATP + H(+) = deamido-NAD(+) + diphosphate. Its pathway is cofactor biosynthesis; NAD(+) biosynthesis; deamido-NAD(+) from nicotinate D-ribonucleotide: step 1/1. Catalyzes the reversible adenylation of nicotinate mononucleotide (NaMN) to nicotinic acid adenine dinucleotide (NaAD). In Staphylococcus haemolyticus (strain JCSC1435), this protein is Probable nicotinate-nucleotide adenylyltransferase.